Reading from the N-terminus, the 427-residue chain is UPF0229 protein YeaH (427 aa).

Positions 79–90 (NDHFVQNDRIER) are enriched in basic and acidic residues. Residues 79–110 (NDHFVQNDRIERPQGGGGGSGSGQGQASQDGE) are disordered. Residues 92 to 102 (QGGGGGSGSGQ) show a composition bias toward gly residues.

It belongs to the UPF0229 family.

This chain is UPF0229 protein YeaH, found in Escherichia coli O127:H6 (strain E2348/69 / EPEC).